Here is an 89-residue protein sequence, read N- to C-terminus: Small ribosomal subunit protein uS15 (89 aa).

The protein belongs to the universal ribosomal protein uS15 family. As to quaternary structure, part of the 30S ribosomal subunit. Forms a bridge to the 50S subunit in the 70S ribosome, contacting the 23S rRNA.

Its function is as follows. One of the primary rRNA binding proteins, it binds directly to 16S rRNA where it helps nucleate assembly of the platform of the 30S subunit by binding and bridging several RNA helices of the 16S rRNA. Functionally, forms an intersubunit bridge (bridge B4) with the 23S rRNA of the 50S subunit in the ribosome. The protein is Small ribosomal subunit protein uS15 of Aliivibrio fischeri (strain ATCC 700601 / ES114) (Vibrio fischeri).